Here is a 275-residue protein sequence, read N- to C-terminus: NH(3)-dependent NAD(+) synthetase (275 aa).

G47 to S54 lines the ATP pocket. D53 contacts Mg(2+). R141 provides a ligand contact to deamido-NAD(+). T161 is an ATP binding site. E166 contributes to the Mg(2+) binding site. Positions 174 and 181 each coordinate deamido-NAD(+). Residues K190 and T212 each contribute to the ATP site. Residue H261 to K262 participates in deamido-NAD(+) binding.

This sequence belongs to the NAD synthetase family. Homodimer.

It carries out the reaction deamido-NAD(+) + NH4(+) + ATP = AMP + diphosphate + NAD(+) + H(+). The protein operates within cofactor biosynthesis; NAD(+) biosynthesis; NAD(+) from deamido-NAD(+) (ammonia route): step 1/1. Catalyzes the ATP-dependent amidation of deamido-NAD to form NAD. Uses ammonia as a nitrogen source. This chain is NH(3)-dependent NAD(+) synthetase, found in Enterococcus faecalis (strain ATCC 700802 / V583).